The chain runs to 60 residues: Small ribosomal subunit protein bS21 (60 aa).

Residues 41-60 (PEEKRKRKAIARRRQRSRRR) form a disordered region. A compositionally biased stretch (basic residues) spans 45 to 60 (RKRKAIARRRQRSRRR).

It belongs to the bacterial ribosomal protein bS21 family.

This chain is Small ribosomal subunit protein bS21, found in Gloeothece citriformis (strain PCC 7424) (Cyanothece sp. (strain PCC 7424)).